Here is a 618-residue protein sequence, read N- to C-terminus: 1-deoxy-D-xylulose-5-phosphate synthase (618 aa).

Residues histidine 76 and 117-119 each bind thiamine diphosphate; that span reads GHS. Aspartate 148 lines the Mg(2+) pocket. Residues 149-150, asparagine 177, tyrosine 284, and glutamate 364 contribute to the thiamine diphosphate site; that span reads GA. Position 177 (asparagine 177) interacts with Mg(2+).

Belongs to the transketolase family. DXPS subfamily. As to quaternary structure, homodimer. Mg(2+) is required as a cofactor. It depends on thiamine diphosphate as a cofactor.

It carries out the reaction D-glyceraldehyde 3-phosphate + pyruvate + H(+) = 1-deoxy-D-xylulose 5-phosphate + CO2. It participates in metabolic intermediate biosynthesis; 1-deoxy-D-xylulose 5-phosphate biosynthesis; 1-deoxy-D-xylulose 5-phosphate from D-glyceraldehyde 3-phosphate and pyruvate: step 1/1. Functionally, catalyzes the acyloin condensation reaction between C atoms 2 and 3 of pyruvate and glyceraldehyde 3-phosphate to yield 1-deoxy-D-xylulose-5-phosphate (DXP). This Francisella philomiragia subsp. philomiragia (strain ATCC 25017 / CCUG 19701 / FSC 153 / O#319-036) protein is 1-deoxy-D-xylulose-5-phosphate synthase.